A 235-amino-acid chain; its full sequence is MTTDAPQKAVVLFSGGLDSTTCLAVARRDGFLPCALSFEYGQRHKVELEAARRVAKAMAVTTHLILPLPLGSIGGSALTADIDVPKDRDIGEMEADIPVTYVPARNTIFLSMALGWAEVLGASDIYIGVNALDYSGYPDCRPEFIAAFEAMANLAVKEAVEGRLAIRIHTPLLHLSKAGIVELGTSLGVDYGLTHSCYDPAPDGLACGRCDSCLLRRKGFEEAGVADPTRYRPSL.

Residue 13–23 (FSGGLDSTTCL) coordinates ATP. Zn(2+)-binding residues include Cys-197, Cys-207, Cys-210, and Cys-213.

This sequence belongs to the QueC family. Requires Zn(2+) as cofactor.

The enzyme catalyses 7-carboxy-7-deazaguanine + NH4(+) + ATP = 7-cyano-7-deazaguanine + ADP + phosphate + H2O + H(+). It functions in the pathway purine metabolism; 7-cyano-7-deazaguanine biosynthesis. Functionally, catalyzes the ATP-dependent conversion of 7-carboxy-7-deazaguanine (CDG) to 7-cyano-7-deazaguanine (preQ(0)). The protein is 7-cyano-7-deazaguanine synthase of Solidesulfovibrio magneticus (strain ATCC 700980 / DSM 13731 / RS-1) (Desulfovibrio magneticus).